Consider the following 1685-residue polypeptide: PHD and RING finger domain-containing protein 1 (1685 aa).

A disordered region spans residues 1 to 82; sequence MDDDNLDELV…GSEDSEDGIE (82 aa). Positions 41–81 are enriched in acidic residues; the sequence is DSEDDTGSEQDDDTDGEETEGLSEEEDPEDRSGSEDSEDGI. The RING-type; degenerate zinc finger occupies 109–150; that stretch reads CPICLNAFRDQAVGTPETCAHYFCLDCIIEWSRNANSCPVDR. The segment at 188-238 adopts a PHD-type zinc-finger fold; that stretch reads PTFCEVCGRSDREDRLLLCDGCDAGYHMECLDPPLQEVPVDEWFCPECAVP. Disordered regions lie at residues 333–390, 449–483, 537–590, 606–777, and 809–860; these read PLTP…KLKN, DSNG…VARP, SAKR…GLSC, TPVR…GSSF, and KVQR…LLPS. Thr335 bears the Phosphothreonine mark. 2 stretches are compositionally biased toward basic residues: residues 339-364 and 372-387; these read PAKR…RSSV and RAKK…KGRK. 2 positions are modified to phosphoserine: Ser450 and Ser460. Composition is skewed to polar residues over residues 606–625 and 637–662; these read TPVR…GNLS and SPRL…NFPS. Residues 671 to 682 are compositionally biased toward basic and acidic residues; it reads QKTDPRRPDFSK. Composition is skewed to polar residues over residues 694–709 and 737–751; these read SNST…QTVE and SSRG…TSGS. Residues Ser817, Ser848, Ser849, Ser867, Ser870, Ser922, Ser948, Ser984, and Ser1002 each carry the phosphoserine modification. Residues 835-860 show a composition bias toward low complexity; that stretch reads PFDPTGSDSSPPSSSPESLGSGLLPS. Disordered stretches follow at residues 892–1229, 1290–1355, and 1369–1390; these read GTEM…VSEV, QLDD…APSD, and TTLS…SGRG. Residues 922–934 show a composition bias toward acidic residues; sequence SDLEQEGLGEIEP. A compositionally biased stretch (low complexity) spans 1001–1010; the sequence is SSRSRSTSSS. 2 stretches are compositionally biased toward basic residues: residues 1011–1031 and 1054–1064; these read RSRK…RTRS and KRHRAKTKSRR. Over residues 1065-1075 the composition is skewed to basic and acidic residues; it reads SSSDRASSQDR. Basic residues-rich tracts occupy residues 1089-1102 and 1117-1129; these read GPWG…KSRS and SRRR…GSRS. Composition is skewed to basic and acidic residues over residues 1130 to 1143 and 1151 to 1165; these read RGRD…LERD and RSRE…MTRS. Phosphoserine occurs at positions 1135 and 1139. Basic residues predominate over residues 1181–1191; sequence RTRRPHSREKH. The span at 1192-1201 shows a compositional bias: basic and acidic residues; sequence PHSPEKKGAV. Position 1205 is a phosphoserine (Ser1205). The span at 1292 to 1305 shows a compositional bias: low complexity; the sequence is DDMSSPPSPESTDS. Phosphoserine is present on residues Ser1372 and Ser1383. At Thr1416 the chain carries Phosphothreonine. 3 disordered regions span residues 1421-1448, 1466-1501, and 1569-1591; these read EAEA…EGDW, LPPP…VGTL, and LAVP…AEKT. Residues 1577 to 1591 are compositionally biased toward basic and acidic residues; sequence SEERTATPKTAAEKT. Residues 1589 to 1615 adopt a coiled-coil conformation; that stretch reads EKTKKEEYMKKLHMQERAVEEVKLAIK.

As to quaternary structure, interacts with POLR2A (via the C-terminal domain).

The protein is PHD and RING finger domain-containing protein 1 of Rattus norvegicus (Rat).